The primary structure comprises 1755 residues: Transposon Ty1-ML1 Gag-Pol polyprotein (1755 aa).

Polar residues-rich tracts occupy residues 1–23 (MESQ…SVTS), 48–60 (TKAN…TPAS), and 127–152 (QSQF…GNTF). 3 disordered regions span residues 1–88 (MESQ…YPQQ), 126–173 (PQSQ…RPPP), and 352–421 (GSRN…SKST). Residues 153–165 (TDSSSADSDMTST) show a composition bias toward low complexity. Residues 299-401 (NNGIHINNKV…NSKSKTARAH (103 aa)) are RNA-binding. Residues 402 to 418 (NVSTSNNSPSTDNDSIS) are compositionally biased toward low complexity. Catalysis depends on aspartate 461, which acts as the For protease activity; shared with dimeric partner. The interval 583-640 (NVHTSESTRKYPYPFIHRMLAHANAQTIRYSLKNNTITYFNESDVDWSSAIDYQCPDC) is integrase-type zinc finger-like. In terms of domain architecture, Integrase catalytic spans 660-835 (NSYEPFQYLH…AGLDISTLLP (176 aa)). Mg(2+)-binding residues include aspartate 671 and aspartate 736. 3 disordered regions span residues 956 to 1087 (SKAV…ETEK), 1092 to 1111 (RSPS…NIVP), and 1130 to 1171 (DLPL…DSNA). Low complexity predominate over residues 960 to 969 (SPTDSTPPST). A compositionally biased stretch (polar residues) spans 1005–1015 (STPQISNIEST). Positions 1038 to 1053 (ESSHASKSKDFRHSDS) are enriched in basic and acidic residues. 2 stretches are compositionally biased toward polar residues: residues 1054–1082 (YSEN…QISD) and 1101–1111 (PENNSSHNIVP). The Bipartite nuclear localization signal signature appears at 1178-1212 (KKRSLEDNETEIKVSRDTWNTKNMRSLEPPRSKKR). Residues 1338-1476 (NNYYITQLDI…DILGLEIKYQ (139 aa)) form the Reverse transcriptase Ty1/copia-type domain. Mg(2+) contacts are provided by aspartate 1346, aspartate 1427, aspartate 1428, aspartate 1610, glutamate 1652, and aspartate 1685. One can recognise an RNase H Ty1/copia-type domain in the interval 1610-1752 (DASYGNQPYY…IKTFKLLTNK (143 aa)).

The capsid protein forms a homotrimer, from which the VLPs are assembled. The protease is a homodimer, whose active site consists of two apposed aspartic acid residues. Post-translationally, initially, virus-like particles (VLPs) are composed of the structural unprocessed proteins Gag and Gag-Pol, and also contain the host initiator methionine tRNA (tRNA(i)-Met) which serves as a primer for minus-strand DNA synthesis, and a dimer of genomic Ty RNA. Processing of the polyproteins occurs within the particle and proceeds by an ordered pathway, called maturation. First, the protease (PR) is released by autocatalytic cleavage of the Gag-Pol polyprotein yielding capsid protein p45 and a Pol-p154 precursor protein. This cleavage is a prerequisite for subsequent processing of Pol-p154 at the remaining sites to release the mature structural and catalytic proteins. Maturation takes place prior to the RT reaction and is required to produce transposition-competent VLPs.

It is found in the cytoplasm. Its subcellular location is the nucleus. The enzyme catalyses DNA(n) + a 2'-deoxyribonucleoside 5'-triphosphate = DNA(n+1) + diphosphate. It catalyses the reaction Endonucleolytic cleavage to 5'-phosphomonoester.. In terms of biological role, capsid protein (CA) is the structural component of the virus-like particle (VLP), forming the shell that encapsulates the retrotransposons dimeric RNA genome. The particles are assembled from trimer-clustered units and there are holes in the capsid shells that allow for the diffusion of macromolecules. CA also has nucleocapsid-like chaperone activity, promoting primer tRNA(i)-Met annealing to the multipartite primer-binding site (PBS), dimerization of Ty1 RNA and initiation of reverse transcription. The aspartyl protease (PR) mediates the proteolytic cleavages of the Gag and Gag-Pol polyproteins after assembly of the VLP. Its function is as follows. Reverse transcriptase/ribonuclease H (RT) is a multifunctional enzyme that catalyzes the conversion of the retro-elements RNA genome into dsDNA within the VLP. The enzyme displays a DNA polymerase activity that can copy either DNA or RNA templates, and a ribonuclease H (RNase H) activity that cleaves the RNA strand of RNA-DNA heteroduplexes during plus-strand synthesis and hydrolyzes RNA primers. The conversion leads to a linear dsDNA copy of the retrotransposon that includes long terminal repeats (LTRs) at both ends. Functionally, integrase (IN) targets the VLP to the nucleus, where a subparticle preintegration complex (PIC) containing at least integrase and the newly synthesized dsDNA copy of the retrotransposon must transit the nuclear membrane. Once in the nucleus, integrase performs the integration of the dsDNA into the host genome. The sequence is that of Transposon Ty1-ML1 Gag-Pol polyprotein (TY1B-ML1) from Saccharomyces cerevisiae (strain ATCC 204508 / S288c) (Baker's yeast).